We begin with the raw amino-acid sequence, 249 residues long: ATP synthase subunit a, chloroplastic (249 aa).

5 helical membrane-spanning segments follow: residues 40 to 60, 97 to 117, 136 to 156, 201 to 221, and 222 to 242; these read QVLI…VLAV, VPFI…GALL, INTT…AGLS, LVVV…VMFL, and GLFT…AYIG.

The protein belongs to the ATPase A chain family. In terms of assembly, F-type ATPases have 2 components, CF(1) - the catalytic core - and CF(0) - the membrane proton channel. CF(1) has five subunits: alpha(3), beta(3), gamma(1), delta(1), epsilon(1). CF(0) has four main subunits: a, b, b' and c.

The protein localises to the plastid. It is found in the chloroplast thylakoid membrane. Its function is as follows. Key component of the proton channel; it plays a direct role in the translocation of protons across the membrane. The polypeptide is ATP synthase subunit a, chloroplastic (Arabis hirsuta (Hairy rock-cress)).